The sequence spans 470 residues: Sulfate adenylyltransferase subunit 1 (470 aa).

Residues 22 to 238 form the tr-type G domain; that stretch reads KELLRFITCG…ETIKIDYAYT (217 aa). The tract at residues 31–38 is G1; sequence GSVDDGKS. Residue 31-38 coordinates GTP; that stretch reads GSVDDGKS. Positions 89 to 93 are G2; that stretch reads GITID. Residues 110–113 are G3; sequence DTPG. GTP is bound by residues 110 to 114 and 165 to 168; these read DTPGH and NKMD. The tract at residues 165–168 is G4; that stretch reads NKMD. Residues 202 to 204 are G5; that stretch reads SAL.

This sequence belongs to the TRAFAC class translation factor GTPase superfamily. Classic translation factor GTPase family. CysN/NodQ subfamily. Heterodimer composed of CysD, the smaller subunit, and CysN.

The catalysed reaction is sulfate + ATP + H(+) = adenosine 5'-phosphosulfate + diphosphate. The protein operates within sulfur metabolism; hydrogen sulfide biosynthesis; sulfite from sulfate: step 1/3. Its function is as follows. With CysD forms the ATP sulfurylase (ATPS) that catalyzes the adenylation of sulfate producing adenosine 5'-phosphosulfate (APS) and diphosphate, the first enzymatic step in sulfur assimilation pathway. APS synthesis involves the formation of a high-energy phosphoric-sulfuric acid anhydride bond driven by GTP hydrolysis by CysN coupled to ATP hydrolysis by CysD. The sequence is that of Sulfate adenylyltransferase subunit 1 from Francisella tularensis subsp. tularensis (strain SCHU S4 / Schu 4).